The primary structure comprises 649 residues: Lysophospholipase (649 aa).

The signal sequence occupies residues 1–21 (MNLKEWLLFSDAVFFAQGTLA). N-linked (GlcNAc...) asparagine glycosylation is found at asparagine 32, asparagine 51, asparagine 77, asparagine 90, asparagine 121, asparagine 158, asparagine 168, asparagine 213, asparagine 275, asparagine 343, asparagine 386, asparagine 457, asparagine 487, asparagine 511, asparagine 539, asparagine 563, and asparagine 580. One can recognise a PLA2c domain in the interval 34–584 (SCDEDINLIR…TNYCWNGTID (551 aa)).

It belongs to the lysophospholipase family.

It localises to the secreted. The enzyme catalyses a 1-acyl-sn-glycero-3-phosphocholine + H2O = sn-glycerol 3-phosphocholine + a fatty acid + H(+). Functionally, catalyzes the release of fatty acids from lysophospholipids. The sequence is that of Lysophospholipase from Torulaspora delbrueckii (Yeast).